A 312-amino-acid polypeptide reads, in one-letter code: Protoheme IX farnesyltransferase 2 (312 aa).

A run of 8 helical transmembrane segments spans residues 31–51 (VMSLVIFTALVGLMIAPGHIH), 52–72 (PVLGFIAILCIAVGAGASGAL), 119–139 (ALVNWYAGGLLAFTIFFYVVI), 152–172 (IVIGGAAGALPPVVAWAAATG), 179–199 (LLLFLIIFFWTPPHFWALALF), 225–245 (ILLYTIVLVAIAAAPWPLGYF), 247–267 (WVYGVTSLILGAGMLVLAIEV), and 283–303 (LFAFSILYLFALFAVLLLDVV).

It belongs to the UbiA prenyltransferase family. Protoheme IX farnesyltransferase subfamily.

It is found in the cell inner membrane. The enzyme catalyses heme b + (2E,6E)-farnesyl diphosphate + H2O = Fe(II)-heme o + diphosphate. It functions in the pathway porphyrin-containing compound metabolism; heme O biosynthesis; heme O from protoheme: step 1/1. Converts heme B (protoheme IX) to heme O by substitution of the vinyl group on carbon 2 of heme B porphyrin ring with a hydroxyethyl farnesyl side group. In Nitrobacter winogradskyi (strain ATCC 25391 / DSM 10237 / CIP 104748 / NCIMB 11846 / Nb-255), this protein is Protoheme IX farnesyltransferase 2.